Consider the following 205-residue polypeptide: Mitotic spindle assembly checkpoint protein MAD2A (205 aa).

N-acetylalanine is present on A2. The HORMA domain maps to 14-197 (RGSAEIVAEF…TTIHKVNSMV (184 aa)). 4 positions are modified to phosphoserine: S130, S170, S185, and S195. Residues 195 to 205 (SMVAYKTPVND) are required for assuming the closed conformation and for interaction with CDC20.

The protein belongs to the MAD2 family. Monomer and homodimer. Heterodimerizes with MAD2L1 in order to form a tetrameric MAD1L1-MAD2L1 core complex. In the closed and open conformation, interacts with MAD1L1. Formation of a heterotetrameric core complex containing two molecules each of MAD1L1 and of MAD2L1 promotes binding of another molecule of MAD2L1 to each MAD2L1, resulting in a heterohexamer. Interacts with MAD2L1BP. Interacts with ADAM17/TACE. Interacts with CDC20. Dimeric MAD2L1 in the closed conformation interacts with CDC20. Monomeric MAD2L1 in the open conformation does not interact with CDC20. CDC20 competes with MAD1L1 for MAD2L1 binding. In the closed conformation, interacts with BUB1B. Interacts with TTK. Interacts with TPR. Binds to UBD (via ubiquitin-like 1 domain) during mitosis. Interacts with isoform 1 and isoform 2 of NEK2. Interacts with HSF1; this interaction occurs in mitosis. Post-translationally, phosphorylated on multiple serine residues. The level of phosphorylation varies during the cell cycle and is highest during mitosis. Phosphorylation abolishes interaction with MAD1L1 and reduces interaction with CDC20. Phosphorylated by NEK2.

It localises to the nucleus. Its subcellular location is the chromosome. It is found in the centromere. The protein resides in the kinetochore. The protein localises to the cytoplasm. It localises to the cytoskeleton. Its subcellular location is the spindle pole. In terms of biological role, component of the spindle-assembly checkpoint that prevents the onset of anaphase until all chromosomes are properly aligned at the metaphase plate. In the closed conformation (C-MAD2) forms a heterotetrameric complex with MAD1L1 at unattached kinetochores during prometaphase, and recruits an open conformation of MAD2L1 (O-MAD2) which then promotes the conversion of O-MAD2 to C-MAD2. Required for the execution of the mitotic checkpoint which monitors the process of kinetochore-spindle attachment and inhibits the activity of the anaphase promoting complex by sequestering CDC20 until all chromosomes are aligned at the metaphase plate. This chain is Mitotic spindle assembly checkpoint protein MAD2A (Mad2l1), found in Mus musculus (Mouse).